The primary structure comprises 474 residues: 3-isopropylmalate dehydratase large subunit (474 aa).

Positions 353, 414, and 417 each coordinate [4Fe-4S] cluster.

It belongs to the aconitase/IPM isomerase family. LeuC type 1 subfamily. As to quaternary structure, heterodimer of LeuC and LeuD. [4Fe-4S] cluster is required as a cofactor.

It carries out the reaction (2R,3S)-3-isopropylmalate = (2S)-2-isopropylmalate. Its pathway is amino-acid biosynthesis; L-leucine biosynthesis; L-leucine from 3-methyl-2-oxobutanoate: step 2/4. Functionally, catalyzes the isomerization between 2-isopropylmalate and 3-isopropylmalate, via the formation of 2-isopropylmaleate. This Xylella fastidiosa (strain 9a5c) protein is 3-isopropylmalate dehydratase large subunit.